Reading from the N-terminus, the 118-residue chain is Large ribosomal subunit protein bL20 (118 aa).

The protein belongs to the bacterial ribosomal protein bL20 family.

Its function is as follows. Binds directly to 23S ribosomal RNA and is necessary for the in vitro assembly process of the 50S ribosomal subunit. It is not involved in the protein synthesizing functions of that subunit. This chain is Large ribosomal subunit protein bL20, found in Desulforamulus reducens (strain ATCC BAA-1160 / DSM 100696 / MI-1) (Desulfotomaculum reducens).